Consider the following 500-residue polypeptide: MKLISVLITFLLATVIYSQTSPATLKFTVQVYDQFPGFNNNFEPGLGNAITGLIKSTLNSTSRVPELVSTEARIVKNINGGIINPSLFPYFFSPQQDSSLPGQNSPLSLDLIFTYDTTRKIYVYDNQNFFPIDNQGFDVDPAKRIYLNEKKTYHNYHFCMKMNTVFTYKGYEVFNFRGDDDVWVFINNKLVIDLGGLHSPIGTSVDTMTLGLTIGNSYNFDLFFCERHTVGSTIKIETNLLFYCPFKDYCGVCQGDGSSCCNPLTTCNDNNQCTIDSCPSANTIIGPGSIPNYCFHTPKINTNPIDICFNYQCNSSTGNFDPIPIPCLDRSSECLSTIGCNSTVGCQYESICNSNVCNIQNQCSSNGTCVPKSSNDCGIELDGQVDKCKIYSCDSNGGVGCIKEDKCKPSSNPCISTQCNATNGQCYETQIPGDICDCGCGIPENKCKVSWCTPEGICQPKFKSEIDDNNSCTLDSCDPCTGIISHMTAPQCLSCNQCSN.

An N-terminal signal peptide occupies residues 1 to 18 (MKLISVLITFLLATVIYS). A glycan (N-linked (GlcNAc...) asparagine) is linked at Asn59. Positions 114–256 (TYDTTRKIYV…KDYCGVCQGD (143 aa)) constitute a PA14 domain. Asn314, Asn341, Asn366, Asn420, and Asn469 each carry an N-linked (GlcNAc...) asparagine glycan.

Belongs to the prespore-cell-inducing factor family.

It is found in the secreted. The polypeptide is Protein psiE (psiE) (Dictyostelium discoideum (Social amoeba)).